The sequence spans 69 residues: uncharacterized protein (69 aa).

Positions 1–16 (MKKIMLFLAMTSILSA) are cleaved as a signal peptide. The N-palmitoyl cysteine moiety is linked to residue Cys-17. Residue Cys-17 is the site of S-diacylglycerol cysteine attachment.

It is found in the cell membrane. This is an uncharacterized protein from Bacillus subtilis (strain 168).